The chain runs to 632 residues: Asparagine synthetase [glutamine-hydrolyzing] 1 (632 aa).

C2 (for GATase activity) is an active-site residue. In terms of domain architecture, Glutamine amidotransferase type-2 spans 2-214; the sequence is CGFVGVFNKH…PGSQFTIRPD (213 aa). Residues 52–56, 77–79, and D102 contribute to the L-glutamine site; these read RLSII and NGE. Residues V288 and 361-362 contribute to the ATP site; that span reads SG.

The protein belongs to the asparagine synthetase family.

It catalyses the reaction L-aspartate + L-glutamine + ATP + H2O = L-asparagine + L-glutamate + AMP + diphosphate + H(+). Its pathway is amino-acid biosynthesis; L-asparagine biosynthesis; L-asparagine from L-aspartate (L-Gln route): step 1/1. In terms of biological role, main asparagine synthetase in vegetative cells. The chain is Asparagine synthetase [glutamine-hydrolyzing] 1 (asnB) from Bacillus subtilis (strain 168).